A 316-amino-acid chain; its full sequence is Putative ubiquitin-conjugating enzyme E2 39 (316 aa).

Residues 57–217 (NWVKDIQKEW…VFVFSLKTMH (161 aa)) enclose the UBC core domain. Cysteine 143 functions as the Glycyl thioester intermediate in the catalytic mechanism.

The protein belongs to the ubiquitin-conjugating enzyme family.

It carries out the reaction S-ubiquitinyl-[E1 ubiquitin-activating enzyme]-L-cysteine + [E2 ubiquitin-conjugating enzyme]-L-cysteine = [E1 ubiquitin-activating enzyme]-L-cysteine + S-ubiquitinyl-[E2 ubiquitin-conjugating enzyme]-L-cysteine.. It participates in protein modification; protein ubiquitination. Accepts the ubiquitin from the E1 complex and catalyzes its covalent attachment to other proteins. The protein is Putative ubiquitin-conjugating enzyme E2 39 (UBC39) of Arabidopsis thaliana (Mouse-ear cress).